The chain runs to 431 residues: Adenylosuccinate synthetase (431 aa).

GTP-binding positions include 12 to 18 (GDEGKGK) and 40 to 42 (GHT). Asp13 (proton acceptor) is an active-site residue. Mg(2+) is bound by residues Asp13 and Gly40. Residues 13–16 (DEGK), 38–41 (NAGH), Thr131, Arg145, Gln225, Thr240, and Arg304 contribute to the IMP site. The active-site Proton donor is the His41. 300-306 (TNTGRRR) contributes to the substrate binding site. GTP-binding positions include Arg306, 332-334 (KLD), and 414-416 (STS).

This sequence belongs to the adenylosuccinate synthetase family. As to quaternary structure, homodimer. The cofactor is Mg(2+).

It is found in the cytoplasm. The enzyme catalyses IMP + L-aspartate + GTP = N(6)-(1,2-dicarboxyethyl)-AMP + GDP + phosphate + 2 H(+). The protein operates within purine metabolism; AMP biosynthesis via de novo pathway; AMP from IMP: step 1/2. In terms of biological role, plays an important role in the de novo pathway of purine nucleotide biosynthesis. Catalyzes the first committed step in the biosynthesis of AMP from IMP. The sequence is that of Adenylosuccinate synthetase from Methylocella silvestris (strain DSM 15510 / CIP 108128 / LMG 27833 / NCIMB 13906 / BL2).